Consider the following 998-residue polypeptide: Antigenic heat-stable 120 kDa protein (998 aa).

Residues 1-69 (GGFMSQDHTG…LSGTISTDDQ (69 aa)) form a disordered region. A compositionally biased stretch (acidic residues) spans 12-21 (ENDEGYESDI). A compositionally biased stretch (polar residues) spans 46-68 (TPASSTQSTPAISTLSGTISTDD).

It is found in the cytoplasm. This chain is Antigenic heat-stable 120 kDa protein (sca4), found in Rickettsia akari.